We begin with the raw amino-acid sequence, 406 residues long: Tryptophan synthase beta chain (406 aa).

An N6-(pyridoxal phosphate)lysine modification is found at K99.

This sequence belongs to the TrpB family. In terms of assembly, tetramer of two alpha and two beta chains. Requires pyridoxal 5'-phosphate as cofactor.

The catalysed reaction is (1S,2R)-1-C-(indol-3-yl)glycerol 3-phosphate + L-serine = D-glyceraldehyde 3-phosphate + L-tryptophan + H2O. It functions in the pathway amino-acid biosynthesis; L-tryptophan biosynthesis; L-tryptophan from chorismate: step 5/5. Its function is as follows. The beta subunit is responsible for the synthesis of L-tryptophan from indole and L-serine. This Rhizobium johnstonii (strain DSM 114642 / LMG 32736 / 3841) (Rhizobium leguminosarum bv. viciae) protein is Tryptophan synthase beta chain.